We begin with the raw amino-acid sequence, 184 residues long: GTP-dependent dephospho-CoA kinase (184 aa).

D33, V34, D52, K54, and E103 together coordinate GTP.

It belongs to the GTP-dependent DPCK family.

The enzyme catalyses 3'-dephospho-CoA + GTP = GDP + CoA + H(+). Its pathway is cofactor biosynthesis; coenzyme A biosynthesis. Functionally, catalyzes the GTP-dependent phosphorylation of the 3'-hydroxyl group of dephosphocoenzyme A to form coenzyme A (CoA). In Ignicoccus hospitalis (strain KIN4/I / DSM 18386 / JCM 14125), this protein is GTP-dependent dephospho-CoA kinase.